Here is a 1286-residue protein sequence, read N- to C-terminus: Autotransporter adhesin AIDA-I (1286 aa).

The signal sequence occupies residues Met1–Ala49. Ser102, Ser111, and Ser116 each carry an O-alpha-linked (glycero-D-manno-heptose) serine glycan. Thr154 carries O-alpha-linked (glycero-D-manno-heptose) threonine glycosylation. Residues Ser242, Ser252, Ser334, Ser391, Ser409, Ser539, Ser545, Ser558, Ser569, Ser576, Ser577, and Ser582 are each glycosylated (O-alpha-linked (glycero-D-manno-heptose) serine). The Autotransporter domain occupies Thr998–Phe1286. Residues Trp1006–Gly1012 traverse the membrane as a beta stranded segment. Topologically, residues Ile1013–Gln1029 are extracellular. The beta stranded transmembrane segment at Phe1030–Lys1040 threads the bilayer. At Phe1041 to Gly1047 the chain is on the periplasmic side. The beta stranded transmembrane segment at Asp1048–Ala1058 threads the bilayer. The Extracellular portion of the chain corresponds to Asn1059–Gly1079. A beta stranded transmembrane segment spans residues Tyr1080–Thr1087. Over Trp1088–Gly1097 the chain is Periplasmic. A beta stranded membrane pass occupies residues Leu1098–Trp1108. The Extracellular segment spans residues Phe1109–Asn1126. The chain crosses the membrane as a beta stranded span at residues Gly1127–Leu1138. Topologically, residues Asn1139–Glu1152 are periplasmic. The beta stranded transmembrane segment at Phe1153–Met1164 threads the bilayer. The Extracellular portion of the chain corresponds to Gly1165 to Asn1186. The beta stranded transmembrane segment at Ile1187–Lys1198 threads the bilayer. Residues Val1199 to Arg1210 are Periplasmic-facing. A beta stranded transmembrane segment spans residues Phe1211–His1221. Residues Asn1222–Asn1242 lie on the Extracellular side of the membrane. A beta stranded membrane pass occupies residues Gln1243–Val1253. Residues Ile1254–Ser1259 lie on the Periplasmic side of the membrane. Residues Val1260–Gln1267 form a beta stranded membrane-spanning segment. Over Ala1268–Ala1275 the chain is Extracellular. A beta stranded membrane pass occupies residues Ile1276–Tyr1284. The Periplasmic portion of the chain corresponds to Ser1285–Phe1286.

In terms of assembly, intercellular AIDA-AIDA interaction is responsible for bacterial autoaggregation. AIDA can also interact with antigen 43 (Ag43), and the resultant intercellular AIDA-Ag43 interaction causes cell aggregation. Post-translationally, glycosylated on serine residues by AHH and AAH2 in the cytoplasm. Glycosylated with an average of 19 heptose residues. Glycosylated with either ADP-L, D-heptose or ADP-D, D-heptose. Glycosylation is required for protein folding/stabilization and resistance to protease-mediated degradation. Glycosylation is required for bacteria adhesion to mammalian cells. Glycosylation is dispensable for cell outer membrane localization. Glycosylation is dispensable for AIDA-mediated cell-cell aggregation and induction of biofilm formation. Glycosylation is dispensable for interaction with Ag43.

It is found in the periplasm. The protein resides in the secreted. It localises to the cell surface. The protein localises to the cell outer membrane. Potent bacterial adhesin that mediates bacterial attachment to a broad variety of human and other mammalian cells. Has additional virulence properties, as it is capable of mediating bacterial autoaggregation via intercellular self-recognition and it is a highly efficient initiator of biofilm formation. This is Autotransporter adhesin AIDA-I (aidA) from Escherichia coli.